The chain runs to 85 residues: MGTQPLSGLLCTQGHVKRTSITHSVLLLCYALSTMRTLRHLLGLQQTQCALTVMTCASVSWNTVRLALRYSSCLTLTLVMPRSTR.

In Escherichia coli (Bacteriophage T7), this protein is Protein 19.2.